A 352-amino-acid chain; its full sequence is Divinyl chlorophyll a/b light-harvesting protein PcbH (352 aa).

6 consecutive transmembrane segments (helical) span residues 27–47 (FIGSHVGHTGIICFATGASCL), 88–108 (VATIAIFHLIFSMVYGGAGLA), 140–160 (FILGHHLIFLGVANIWFVEWA), 202–222 (VMSGHAFLAFLQISGGAFHIA), 242–262 (AVLSWSLAGLFLMGVVAAFWA), and 309–329 (LVNVQYYFAFFCLQGHLWHAL).

This sequence belongs to the PsbB/PsbC family. IsiA/Pcb subfamily. In terms of assembly, the antenna complex consists of divinyl chlorophylls (a and b) and divinyl chlorophyll a/b binding proteins and binds more divinyl chlorophyll b than does the antenna complex from high-light-adapted Prochlorococcus. Divinyl chlorophyll a serves as cofactor. Divinyl chlorophyll b is required as a cofactor.

Its subcellular location is the cellular thylakoid membrane. Its function is as follows. The antenna complex functions as a light receptor, it captures and delivers excitation energy to photosystems II and I. The Prochlorales pcb genes are not related to higher plant LHCs. This is Divinyl chlorophyll a/b light-harvesting protein PcbH (pcbH) from Prochlorococcus marinus (strain SARG / CCMP1375 / SS120).